A 310-amino-acid polypeptide reads, in one-letter code: tRNA-cytidine(32) 2-sulfurtransferase (310 aa).

A PP-loop motif motif is present at residues 45-50 (SGGKDS). The [4Fe-4S] cluster site is built by cysteine 120, cysteine 123, and cysteine 211.

It belongs to the TtcA family. In terms of assembly, homodimer. It depends on Mg(2+) as a cofactor. [4Fe-4S] cluster is required as a cofactor.

The protein localises to the cytoplasm. It carries out the reaction cytidine(32) in tRNA + S-sulfanyl-L-cysteinyl-[cysteine desulfurase] + AH2 + ATP = 2-thiocytidine(32) in tRNA + L-cysteinyl-[cysteine desulfurase] + A + AMP + diphosphate + H(+). Its pathway is tRNA modification. In terms of biological role, catalyzes the ATP-dependent 2-thiolation of cytidine in position 32 of tRNA, to form 2-thiocytidine (s(2)C32). The sulfur atoms are provided by the cysteine/cysteine desulfurase (IscS) system. In Shewanella baltica (strain OS185), this protein is tRNA-cytidine(32) 2-sulfurtransferase.